Consider the following 346-residue polypeptide: 3',5'-cyclic-nucleotide phosphodiesterase (346 aa).

It belongs to the cyclic nucleotide phosphodiesterase class-II family.

The enzyme catalyses a nucleoside 3',5'-cyclic phosphate + H2O = a nucleoside 5'-phosphate + H(+). The protein is 3',5'-cyclic-nucleotide phosphodiesterase (cgs2) of Schizosaccharomyces pombe (strain 972 / ATCC 24843) (Fission yeast).